Reading from the N-terminus, the 332-residue chain is Peroxidase C1C (332 aa).

A signal peptide spans M1–A9. The residue at position 10 (Q10) is a Pyrrolidone carboxylic acid. Cystine bridges form between C20/C100, C53/C58, C106/C310, and C186/C218. N-linked (GlcNAc...) asparagine glycosylation occurs at N22. Residue H51 is the Proton acceptor of the active site. Residues D52, V55, G57, D59, and S61 each coordinate Ca(2+). N-linked (GlcNAc...) asparagine glycosylation occurs at N66. Substrate is bound at residue P148. H179 is a binding site for heme b. T180 provides a ligand contact to Ca(2+). N195, N207, and N223 each carry an N-linked (GlcNAc...) asparagine glycan. Positions 231, 234, and 239 each coordinate Ca(2+). N-linked (GlcNAc...) asparagine glycosylation is present at N264.

This sequence belongs to the peroxidase family. Classical plant (class III) peroxidase subfamily. Ca(2+) is required as a cofactor. Heme b serves as cofactor.

It localises to the secreted. The protein localises to the vacuole. The enzyme catalyses 2 a phenolic donor + H2O2 = 2 a phenolic radical donor + 2 H2O. Its function is as follows. Removal of H(2)O(2), oxidation of toxic reductants, biosynthesis and degradation of lignin, suberization, auxin catabolism, response to environmental stresses such as wounding, pathogen attack and oxidative stress. These functions might be dependent on each isozyme/isoform in each plant tissue. This is Peroxidase C1C (PRXC1C) from Armoracia rusticana (Horseradish).